The chain runs to 230 residues: MAKLVLIRHGQSEWNLSNQFTGWVDVDLSEKGVEEAKAAGQKVKEAGLEFDYAFTSVLTRAIKTLHYVLEESDQLWIPETKTWRLNERHYGALQGLNKKETAEKYGDDQVHIWRRSYDVLPPLLSADDEGSAVNDRRYADLDPNIVPGGENLKVTLERVMPFWEDQIAPKLLDGKNVIIAAHGNSLRALSKYIEQISDDDIMDLEMATGEPVVYDFDEKLKVLGKEKLGK.

Substrate is bound by residues 8-15 (RHGQSEWN), 21-22 (TG), R60, 87-90 (ERHY), K98, 114-115 (RR), and 183-184 (GN). The active-site Tele-phosphohistidine intermediate is the H9. The active-site Proton donor/acceptor is E87.

The protein belongs to the phosphoglycerate mutase family. BPG-dependent PGAM subfamily.

It catalyses the reaction (2R)-2-phosphoglycerate = (2R)-3-phosphoglycerate. It functions in the pathway carbohydrate degradation; glycolysis; pyruvate from D-glyceraldehyde 3-phosphate: step 3/5. Its function is as follows. Catalyzes the interconversion of 2-phosphoglycerate and 3-phosphoglycerate. This Lactiplantibacillus plantarum (strain ATCC BAA-793 / NCIMB 8826 / WCFS1) (Lactobacillus plantarum) protein is 2,3-bisphosphoglycerate-dependent phosphoglycerate mutase 2.